Here is a 404-residue protein sequence, read N- to C-terminus: Glucose-1-phosphate adenylyltransferase (404 aa).

Residues Y99, G164, 179 to 180 (EK), and S197 contribute to the alpha-D-glucose 1-phosphate site.

This sequence belongs to the bacterial/plant glucose-1-phosphate adenylyltransferase family.

The enzyme catalyses alpha-D-glucose 1-phosphate + ATP + H(+) = ADP-alpha-D-glucose + diphosphate. It functions in the pathway capsule biogenesis; capsule polysaccharide biosynthesis. It participates in glycan biosynthesis; glycogen biosynthesis. Functionally, involved in the biosynthesis of ADP-glucose, a building block, required in the biosynthesis of maltose-1-phosphate (M1P) and in the elongation reactions to produce linear alpha-1,4-glucans. Catalyzes the reaction between ATP and alpha-D-glucose 1-phosphate (G1P) to produce pyrophosphate and ADP-Glc. The sequence is that of Glucose-1-phosphate adenylyltransferase from Mycobacterium leprae (strain Br4923).